Reading from the N-terminus, the 217-residue chain is UPF0502 protein KPK_3478 (217 aa).

The protein belongs to the UPF0502 family.

This is UPF0502 protein KPK_3478 from Klebsiella pneumoniae (strain 342).